The chain runs to 986 residues: Translation initiation factor IF-2 (986 aa).

Residues 95-394 (TFVRRDETSA…GRGKHQDQNT (300 aa)) are disordered. The segment covering 122-182 (ELQRREEEAR…EEEAAKKRAA (61 aa)) has biased composition (basic and acidic residues). Over residues 183 to 222 (AEAAAREQAQAAKPAQAAQPAAAKAEPVAAKAAEPAVAKQ) the composition is skewed to low complexity. Positions 228 to 277 (ERAAAERAAQREAAKKAEDAARQAAEKARAEQEQIAKRRAAAEAEARAIR) are enriched in basic and acidic residues. Positions 320–342 (APSRPAAKKPAAAAPAATTTPSA) are enriched in low complexity. The span at 371-384 (TSGGVDRGWRGGPK) shows a compositional bias: gly residues. The 170-residue stretch at 486-655 (PRPPVVTVMG…LLQAEVLELK (170 aa)) folds into the tr-type G domain. A G1 region spans residues 495–502 (GHVDHGKT). A GTP-binding site is contributed by 495 to 502 (GHVDHGKT). The tract at residues 520–524 (GITQH) is G2. The tract at residues 541 to 544 (DTPG) is G3. GTP contacts are provided by residues 541-545 (DTPGH) and 595-598 (NKID). Positions 595 to 598 (NKID) are G4. The segment at 631–633 (SAK) is G5.

It belongs to the TRAFAC class translation factor GTPase superfamily. Classic translation factor GTPase family. IF-2 subfamily.

The protein resides in the cytoplasm. Its function is as follows. One of the essential components for the initiation of protein synthesis. Protects formylmethionyl-tRNA from spontaneous hydrolysis and promotes its binding to the 30S ribosomal subunits. Also involved in the hydrolysis of GTP during the formation of the 70S ribosomal complex. This chain is Translation initiation factor IF-2, found in Paraburkholderia phytofirmans (strain DSM 17436 / LMG 22146 / PsJN) (Burkholderia phytofirmans).